Consider the following 127-residue polypeptide: Small ribosomal subunit protein eS8 (127 aa).

Belongs to the eukaryotic ribosomal protein eS8 family. As to quaternary structure, part of the 30S ribosomal subunit.

The chain is Small ribosomal subunit protein eS8 (rps8e) from Pyrococcus abyssi (strain GE5 / Orsay).